The following is an 89-amino-acid chain: Small ribosomal subunit protein uS15 (89 aa).

Belongs to the universal ribosomal protein uS15 family. Part of the 30S ribosomal subunit. Forms a bridge to the 50S subunit in the 70S ribosome, contacting the 23S rRNA.

One of the primary rRNA binding proteins, it binds directly to 16S rRNA where it helps nucleate assembly of the platform of the 30S subunit by binding and bridging several RNA helices of the 16S rRNA. Its function is as follows. Forms an intersubunit bridge (bridge B4) with the 23S rRNA of the 50S subunit in the ribosome. In Parabacteroides distasonis (strain ATCC 8503 / DSM 20701 / CIP 104284 / JCM 5825 / NCTC 11152), this protein is Small ribosomal subunit protein uS15.